A 45-amino-acid chain; its full sequence is GHVPCGKDRRKCGYHADCCNCCLSGICKPSTSWTGCSTSTFLLTR.

4 cysteine pairs are disulfide-bonded: C5–C19, C12–C22, C18–C27, and C21–C36. L43 is modified (D-leucine). Residue R45 is a propeptide, removed by a carboxypeptidase.

The protein belongs to the conotoxin I1 superfamily. As to expression, expressed by the venom duct.

The protein resides in the secreted. Its function is as follows. Iota-conotoxins bind to voltage-gated sodium channels (Nav) and act as agonists by shifting the voltage-dependence of activation to more hyperpolarized levels. Produces general excitatory symptoms. The polypeptide is Iota-conotoxin-like R11.12 (Conus radiatus (Rayed cone)).